Reading from the N-terminus, the 474-residue chain is Homeobox protein PKNOX2 (474 aa).

Residues 1–42 form a disordered region; it reads MMQHASPAPALTMMATQNVPPPPYQDSPQMTATAQPPSKAQA. Positions 26 to 38 are enriched in polar residues; that stretch reads DSPQMTATAQPPS. One can recognise an MEIS N-terminal domain in the interval 96–179; the sequence is GSECITSASF…MHSDNLLRND (84 aa). The segment at residues 291 to 350 is a DNA-binding region (homeobox); it reads KRGVLPKHATNIMRSWLFQHLMHPYPTEDEKRQIAAQTNLTLLQVNNWFINARRRILQPM. Disordered stretches follow at residues 351–371, 385–405, and 423–474; these read LDASNPDPAPKAKKIKSQHRP, LQQQGGTPGTNPDGSINLDNL, and AAHD…DSLE. A compositionally biased stretch (basic residues) spans 361–371; it reads KAKKIKSQHRP. Over residues 429–456 the composition is skewed to acidic residues; it reads LDGTEEEDEDDMEEEEEEEEELEEEADE.

The protein belongs to the TALE/MEIS homeobox family.

The protein resides in the nucleus. This is Homeobox protein PKNOX2 (Pknox2) from Mus musculus (Mouse).